Consider the following 450-residue polypeptide: Cytochrome c1 (450 aa).

An N-terminal signal peptide occupies residues Met1 to Gly21. Positions Ala24–Glu58 are enriched in low complexity. Residues Ala24–His210 are disordered. Composition is skewed to acidic residues over residues Ala59–Glu77, Pro85–Ala108, and Ala118–Ala194. Heme c contacts are provided by Cys245, Cys248, and His249. Positions Pro284–Gly305 are disordered. Met373 serves as a coordination point for heme c. The helical transmembrane segment at Ser421–Thr435 threads the bilayer.

In terms of assembly, the main subunits of complex b-c1 are: cytochrome b, cytochrome c1 and the Rieske protein. Post-translationally, binds 1 heme c group covalently per subunit.

The protein resides in the cell membrane. In terms of biological role, component of the ubiquinol-cytochrome c reductase complex (complex III or cytochrome b-c1 complex), which is a respiratory chain that generates an electrochemical potential coupled to ATP synthesis. c1 functions as an electron donor to cytochrome c. The protein is Cytochrome c1 (petC) of Paracoccus denitrificans.